Here is a 527-residue protein sequence, read N- to C-terminus: DNA polymerase epsilon subunit 2 (527 aa).

It belongs to the DNA polymerase epsilon subunit B family. Component of the DNA polymerase epsilon complex consisting of four subunits: the catalytic subunit POLE and the accessory subunits POLE2, POLE3 and POLE4.

Its subcellular location is the nucleus. Accessory component of the DNA polymerase epsilon complex. Participates in DNA repair and in chromosomal DNA replication. The chain is DNA polymerase epsilon subunit 2 from Homo sapiens (Human).